We begin with the raw amino-acid sequence, 485 residues long: Glycogen synthase (485 aa).

Lysine 15 is an ADP-alpha-D-glucose binding site.

The protein belongs to the glycosyltransferase 1 family. Bacterial/plant glycogen synthase subfamily.

It carries out the reaction [(1-&gt;4)-alpha-D-glucosyl](n) + ADP-alpha-D-glucose = [(1-&gt;4)-alpha-D-glucosyl](n+1) + ADP + H(+). It participates in glycan biosynthesis; glycogen biosynthesis. Synthesizes alpha-1,4-glucan chains using ADP-glucose. This Geobacillus stearothermophilus (Bacillus stearothermophilus) protein is Glycogen synthase (glgA).